The chain runs to 360 residues: GTP 3',8-cyclase (360 aa).

The segment at 1 to 31 (MTVTALGVPTVRGRSEGSAVASDAPGDGPLL) is disordered. In terms of domain architecture, Radical SAM core spans 33–251 (RFGRSATDLR…LQPHFRLRPD (219 aa)). R42 contacts GTP. Residues C49 and C53 each coordinate [4Fe-4S] cluster. Y55 is a binding site for S-adenosyl-L-methionine. C56 provides a ligand contact to [4Fe-4S] cluster. R93 serves as a coordination point for GTP. Residue G97 coordinates S-adenosyl-L-methionine. T124 contacts GTP. Position 148 (S148) interacts with S-adenosyl-L-methionine. K185 is a GTP binding site. M219 serves as a coordination point for S-adenosyl-L-methionine. [4Fe-4S] cluster-binding residues include C287 and C290. 292 to 294 (RTR) lines the GTP pocket. C304 serves as a coordination point for [4Fe-4S] cluster.

The protein belongs to the radical SAM superfamily. MoaA family. As to quaternary structure, monomer and homodimer. It depends on [4Fe-4S] cluster as a cofactor.

The catalysed reaction is GTP + AH2 + S-adenosyl-L-methionine = (8S)-3',8-cyclo-7,8-dihydroguanosine 5'-triphosphate + 5'-deoxyadenosine + L-methionine + A + H(+). It participates in cofactor biosynthesis; molybdopterin biosynthesis. Functionally, catalyzes the cyclization of GTP to (8S)-3',8-cyclo-7,8-dihydroguanosine 5'-triphosphate. The protein is GTP 3',8-cyclase of Mycobacterium ulcerans (strain Agy99).